The chain runs to 148 residues: Nucleoside diphosphate kinase (148 aa).

Positions 9, 57, 85, 91, 102, and 112 each coordinate ATP. Thr91 is subject to Phosphothreonine. His115 functions as the Pros-phosphohistidine intermediate in the catalytic mechanism. At Ser122 the chain carries Phosphoserine.

This sequence belongs to the NDK family. In terms of assembly, homotetramer. Mg(2+) is required as a cofactor.

Its subcellular location is the cytoplasm. The catalysed reaction is a 2'-deoxyribonucleoside 5'-diphosphate + ATP = a 2'-deoxyribonucleoside 5'-triphosphate + ADP. The enzyme catalyses a ribonucleoside 5'-diphosphate + ATP = a ribonucleoside 5'-triphosphate + ADP. Functionally, major role in the synthesis of nucleoside triphosphates other than ATP. The ATP gamma phosphate is transferred to the NDP beta phosphate via a ping-pong mechanism, using a phosphorylated active-site intermediate. This is Nucleoside diphosphate kinase from Bacillus licheniformis (strain ATCC 14580 / DSM 13 / JCM 2505 / CCUG 7422 / NBRC 12200 / NCIMB 9375 / NCTC 10341 / NRRL NRS-1264 / Gibson 46).